A 154-amino-acid chain; its full sequence is 6,7-dimethyl-8-ribityllumazine synthase (154 aa).

Residues F22, 57 to 59, and 81 to 83 contribute to the 5-amino-6-(D-ribitylamino)uracil site; these read VCE and TVI. Residue 86-87 participates in (2S)-2-hydroxy-3-oxobutyl phosphate binding; that stretch reads KT. Catalysis depends on H89, which acts as the Proton donor. Position 114 (V114) interacts with 5-amino-6-(D-ribitylamino)uracil. R128 provides a ligand contact to (2S)-2-hydroxy-3-oxobutyl phosphate.

It belongs to the DMRL synthase family. As to quaternary structure, forms an icosahedral capsid composed of 60 subunits, arranged as a dodecamer of pentamers.

It carries out the reaction (2S)-2-hydroxy-3-oxobutyl phosphate + 5-amino-6-(D-ribitylamino)uracil = 6,7-dimethyl-8-(1-D-ribityl)lumazine + phosphate + 2 H2O + H(+). It functions in the pathway cofactor biosynthesis; riboflavin biosynthesis; riboflavin from 2-hydroxy-3-oxobutyl phosphate and 5-amino-6-(D-ribitylamino)uracil: step 1/2. Its function is as follows. Catalyzes the formation of 6,7-dimethyl-8-ribityllumazine by condensation of 5-amino-6-(D-ribitylamino)uracil with 3,4-dihydroxy-2-butanone 4-phosphate. This is the penultimate step in the biosynthesis of riboflavin. The sequence is that of 6,7-dimethyl-8-ribityllumazine synthase from Wigglesworthia glossinidia brevipalpis.